A 259-amino-acid polypeptide reads, in one-letter code: Major cell-binding factor (259 aa).

A signal peptide spans 1–26; it reads MVFRKSLLKLAVFALGACVAFSNANA.

It belongs to the bacterial solute-binding protein 3 family.

The protein resides in the cell surface. Its function is as follows. Common antigen and a major cell adherence molecule. Most probably involved, with PEB1C, in a binding-protein-dependent transport system for an amino acid. May be involved in binding to intestinal cells. The sequence is that of Major cell-binding factor (peb1A) from Campylobacter jejuni subsp. jejuni serotype O:2 (strain ATCC 700819 / NCTC 11168).